The chain runs to 419 residues: MSGNSSTDMYLFKKSLRELKGKKGKGTELISVYVPAGRRLSDISQYLRQELSQSSNIKSKTTMKNVQSAIEVILQRLKLLKEPLEMGVIIFAGMIPRGGPGTEKMEVYVLEPPEPVKTFVYRCDSLFYTDPLEDFIQDTEVYGVILVDRNEATIGTVKGKTITVLKKLTSGVPGKFKAGGQSARRLERLIDDAAHQFMVRIGEYATESFMPILEEKKLKGLLLGGPGNTKNEFAEKDYLHHELKKKIIDTFDLCYTEEFGIRELLEKASDLLRDLDLMKEKNLIQRFFKELIKDDGGLSAYGEAQVMKYLGMGAIDTLIVTEDIGITRVTVKCNNCDYTQEVNVKTNEMFKFEDQLKTKACPTCGGAMYIDEEKDIIEYLSELCNVHNTDIIVVSTDTEEGSQISRAFKGMAAILRYKL.

The protein belongs to the eukaryotic release factor 1 family. As to quaternary structure, heterodimer of two subunits, one of which binds GTP.

It is found in the cytoplasm. Directs the termination of nascent peptide synthesis (translation) in response to the termination codons UAA, UAG and UGA. This chain is Peptide chain release factor subunit 1, found in Methanococcus maripaludis (strain C7 / ATCC BAA-1331).